The following is a 1702-amino-acid chain: DNA polymerase (1702 aa).

2 DOD-type homing endonuclease domains span residues 776-909 and 1229-1368; these read LLGY…SLGI and LVGL…IVGI.

This sequence belongs to the DNA polymerase type-B family. This protein undergoes a protein self splicing that involves a post-translational excision of the two intervening regions (inteins) followed by peptide ligation.

The enzyme catalyses DNA(n) + a 2'-deoxyribonucleoside 5'-triphosphate = DNA(n+1) + diphosphate. Its function is as follows. In addition to polymerase activity, this DNA polymerase exhibits 3' to 5' exonuclease activity. Functionally, intein encoded endonucleases are thought to mediate intein mobility by site-specific recombination initiated by endonuclease cleavage at the 'homing site' in gene that lack the intein. The chain is DNA polymerase (pol) from Thermococcus litoralis.